A 147-amino-acid polypeptide reads, in one-letter code: UPF0310 protein in gntR 5'region (147 aa).

It belongs to the UPF0310 family.

This chain is UPF0310 protein in gntR 5'region (oug), found in Bacillus licheniformis.